We begin with the raw amino-acid sequence, 209 residues long: N-acetyltransferase aca1 (209 aa).

In terms of domain architecture, N-acetyltransferase spans 26-202; sequence TNVKNKEELL…DAYIYQYHFP (177 aa). N118 lines the substrate pocket. Residue 128 to 133 participates in CoA binding; it reads RSKGIG. 155–156 lines the substrate pocket; it reads NL.

Belongs to the acetyltransferase family. As to quaternary structure, homodimer.

It is found in the cytoplasm. Its subcellular location is the mitochondrion. The catalysed reaction is L-glutamate 5-semialdehyde + acetyl-CoA = N-acetyl-L-glutamate 5-semialdehyde + CoA + H(+). Functionally, N-acetyltransferase involved in oxidative stress resistance. Acetylates the toxic proline metabolism intermediate (S)-1-pyrroline-5-carboxylate (P5C), or more likely its spontaneously forming tautomer glutamate-5-semialdehyde (GSA) into N-acetyl-GSA for arginine synthesis in the mitochondria. P5C has been shown to increase the levels of reactive oxygen species (ROS) in the cell by inhibiting the function of the respiratory chain in the mitochondria. The enzyme is able to reduce intracellular ROS levels under P5C-induced oxidative stress and protects cells from damage by oxidative stress. Also acetylates and thereby detoxifies the proline analog azetidine-2-carboxylate (AZC), however it is unlikely that AZC is a natural substrate as it occurs only in plants belonging to the Lilaceae family. This chain is N-acetyltransferase aca1, found in Schizosaccharomyces pombe (strain 972 / ATCC 24843) (Fission yeast).